Consider the following 552-residue polypeptide: CTP synthase (552 aa).

Residues 1–270 are amidoligase domain; sequence MTKYVFVTGG…DRIICEELKL (270 aa). Position 13 (Ser13) interacts with CTP. Ser13 contacts UTP. ATP-binding positions include 14 to 19 and Asp71; that span reads SLGKGI. Asp71 and Glu144 together coordinate Mg(2+). CTP contacts are provided by residues 151-153, 191-196, and Lys227; these read DIE and KTKPTQ. Residues 191–196 and Lys227 each bind UTP; that span reads KTKPTQ. Residues 295–547 form the Glutamine amidotransferase type-1 domain; it reads TIGMVGKYVD…VEAALANKQA (253 aa). Gly356 contributes to the L-glutamine binding site. Residue Cys383 is the Nucleophile; for glutamine hydrolysis of the active site. Residues 384–387, Glu407, and Arg473 each bind L-glutamine; that span reads LGMQ. Catalysis depends on residues His520 and Glu522.

This sequence belongs to the CTP synthase family. In terms of assembly, homotetramer.

The catalysed reaction is UTP + L-glutamine + ATP + H2O = CTP + L-glutamate + ADP + phosphate + 2 H(+). It carries out the reaction L-glutamine + H2O = L-glutamate + NH4(+). It catalyses the reaction UTP + NH4(+) + ATP = CTP + ADP + phosphate + 2 H(+). Its pathway is pyrimidine metabolism; CTP biosynthesis via de novo pathway; CTP from UDP: step 2/2. Its activity is regulated as follows. Allosterically activated by GTP, when glutamine is the substrate; GTP has no effect on the reaction when ammonia is the substrate. The allosteric effector GTP functions by stabilizing the protein conformation that binds the tetrahedral intermediate(s) formed during glutamine hydrolysis. Inhibited by the product CTP, via allosteric rather than competitive inhibition. Its function is as follows. Catalyzes the ATP-dependent amination of UTP to CTP with either L-glutamine or ammonia as the source of nitrogen. Regulates intracellular CTP levels through interactions with the four ribonucleotide triphosphates. The chain is CTP synthase from Burkholderia cenocepacia (strain ATCC BAA-245 / DSM 16553 / LMG 16656 / NCTC 13227 / J2315 / CF5610) (Burkholderia cepacia (strain J2315)).